The following is a 145-amino-acid chain: Ribosomal RNA large subunit methyltransferase H (145 aa).

S-adenosyl-L-methionine is bound by residues Gly94 and Leu113–Phe118.

It belongs to the RNA methyltransferase RlmH family. Homodimer.

The protein localises to the cytoplasm. The catalysed reaction is pseudouridine(1915) in 23S rRNA + S-adenosyl-L-methionine = N(3)-methylpseudouridine(1915) in 23S rRNA + S-adenosyl-L-homocysteine + H(+). Functionally, specifically methylates the pseudouridine at position 1915 (m3Psi1915) in 23S rRNA. The protein is Ribosomal RNA large subunit methyltransferase H of Sorangium cellulosum (strain So ce56) (Polyangium cellulosum (strain So ce56)).